Here is a 188-residue protein sequence, read N- to C-terminus: Acireductone dioxygenase (188 aa).

Residues H97, H99, E103, and H141 each coordinate Fe(2+). Residues H97, H99, E103, and H141 each coordinate Ni(2+).

This sequence belongs to the acireductone dioxygenase (ARD) family. In terms of assembly, monomer. It depends on Fe(2+) as a cofactor. Requires Ni(2+) as cofactor.

It carries out the reaction 1,2-dihydroxy-5-(methylsulfanyl)pent-1-en-3-one + O2 = 3-(methylsulfanyl)propanoate + CO + formate + 2 H(+). The enzyme catalyses 1,2-dihydroxy-5-(methylsulfanyl)pent-1-en-3-one + O2 = 4-methylsulfanyl-2-oxobutanoate + formate + 2 H(+). Its pathway is amino-acid biosynthesis; L-methionine biosynthesis via salvage pathway; L-methionine from S-methyl-5-thio-alpha-D-ribose 1-phosphate: step 5/6. Functionally, catalyzes 2 different reactions between oxygen and the acireductone 1,2-dihydroxy-3-keto-5-methylthiopentene (DHK-MTPene) depending upon the metal bound in the active site. Fe-containing acireductone dioxygenase (Fe-ARD) produces formate and 2-keto-4-methylthiobutyrate (KMTB), the alpha-ketoacid precursor of methionine in the methionine recycle pathway. Ni-containing acireductone dioxygenase (Ni-ARD) produces methylthiopropionate, carbon monoxide and formate, and does not lie on the methionine recycle pathway. The protein is Acireductone dioxygenase of Xanthomonas euvesicatoria pv. vesicatoria (strain 85-10) (Xanthomonas campestris pv. vesicatoria).